We begin with the raw amino-acid sequence, 425 residues long: Rho GTPase-activating protein 8 (425 aa).

A CRAL-TRIO domain is found at 13–168 (PFYDVARHGI…EVVRYDEKLQ (156 aa)). Residues 169–192 (NLHKGQPPPPTKTPPPRPPLPTQQ) form a disordered region. Pro residues predominate over residues 174-189 (QPPPPTKTPPPRPPLP). The 187-residue stretch at 195–381 (VSLQYLRDKN…LLIEYYDKVF (187 aa)) folds into the Rho-GAP domain.

In terms of tissue distribution, highly expressed in skeletal muscle, lung and testis, and at lower levels in kidney, stomach and colon. Not detected in heart, liver, spleen, breast, brain, neonatal head or pancreas.

In terms of biological role, GTPase activator for the Rho-type GTPases by converting them to an inactive GDP-bound state. This is Rho GTPase-activating protein 8 (Arhgap8) from Mus musculus (Mouse).